A 149-amino-acid chain; its full sequence is Arginine regulator (149 aa).

Belongs to the ArgR family.

Its subcellular location is the cytoplasm. It participates in amino-acid degradation; L-arginine degradation via ADI pathway. In terms of biological role, regulates the transcription of the arc operon, involved in arginine catabolism. The polypeptide is Arginine regulator (argR1) (Bacillus cereus (strain ATCC 14579 / DSM 31 / CCUG 7414 / JCM 2152 / NBRC 15305 / NCIMB 9373 / NCTC 2599 / NRRL B-3711)).